A 319-amino-acid polypeptide reads, in one-letter code: HTH-type transcriptional regulator YidZ (319 aa).

One can recognise an HTH lysR-type domain in the interval 8–65 (LDLNLLLCLQLLMQERSVTKAAKRMNVTPSAVSKSLAKLRAWFDDPLFVNTPLGLAPT). The H-T-H motif DNA-binding region spans 25–44 (VTKAAKRMNVTPSAVSKSLA).

The protein belongs to the LysR transcriptional regulatory family.

Its function is as follows. Involved in anaerobic NO protection. In Salmonella typhi, this protein is HTH-type transcriptional regulator YidZ.